A 324-amino-acid polypeptide reads, in one-letter code: Heparan sulfate 2-O-sulfotransferase hst-2 (324 aa).

Residues 1 to 6 (MLWKKR) are Cytoplasmic-facing. A helical; Signal-anchor for type II membrane protein membrane pass occupies residues 7-24 (KVLYFAGISVFILILLLL). At 25–324 (KLNSKPKANV…QYHFEKIKPS (300 aa)) the chain is on the lumenal side. Residues N75 and N94 are each glycosylated (N-linked (GlcNAc...) asparagine). Catalysis depends on residues H107 and H109. N161 is a glycosylation site (N-linked (GlcNAc...) asparagine). Intrachain disulfides connect C167–C175 and C188–C194.

The protein belongs to the sulfotransferase 3 family. As to quaternary structure, homotrimer. As to expression, present in the hypodermis, muscle, distal tip cells (DTCs) and in neurons (at protein level).

It localises to the golgi apparatus membrane. In terms of biological role, catalyzes the transfer of sulfate to the C2-position of selected hexuronic acid residues within the maturing heparan sulfate (HS). Involved in cell adhesion and guidance by specifically modifying proteoglycans in the extracellular matrix and on the cell surface that are essential for axon migrations. In Caenorhabditis elegans, this protein is Heparan sulfate 2-O-sulfotransferase hst-2.